The chain runs to 412 residues: Putative pectate lyase 11 (412 aa).

The first 24 residues, 1 to 24 (MVSYSNNHFAYAFLLLLTIGNTLA), serve as a signal peptide directing secretion. The Ca(2+) site is built by D210, D234, and D238. The active site involves R290.

It belongs to the polysaccharide lyase 1 family. Ca(2+) is required as a cofactor.

The enzyme catalyses Eliminative cleavage of (1-&gt;4)-alpha-D-galacturonan to give oligosaccharides with 4-deoxy-alpha-D-galact-4-enuronosyl groups at their non-reducing ends.. It functions in the pathway glycan metabolism; pectin degradation; 2-dehydro-3-deoxy-D-gluconate from pectin: step 2/5. The polypeptide is Putative pectate lyase 11 (Arabidopsis thaliana (Mouse-ear cress)).